The sequence spans 454 residues: Divalent metal cation transporter MntH (454 aa).

The segment at 1–21 is disordered; that stretch reads MSDAEATAPRSSWRFAGRDED. The next 11 membrane-spanning stretches (helical) occupy residues 45-65, 78-98, 122-142, 153-173, 182-202, 220-240, 275-295, 312-332, 368-388, 389-409, and 426-446; these read LFAFMGPGYMVSVGYMDPGNW, TLLFVIMLSNLMAILLQALAA, FVLWIACELAIIACDLAEVIG, IPLIGGAILTALDAFLVLLLM, AFVIALLIIIFSCFAIQIFVA, IVTNPAMLYIAIGIIGATVMP, IALMLALFVNAAILIVSAVAF, LLSPLLGLGIASILFAVALLA, GLAIVPVVVVTALYGEKGTGQ, LLVFSQVILSMQLPFAVVPLV, and GVAALAWVVAAIILVLNFKLL.

The protein belongs to the NRAMP family.

It is found in the cell inner membrane. Its function is as follows. H(+)-stimulated, divalent metal cation uptake system. In Mesorhizobium japonicum (strain LMG 29417 / CECT 9101 / MAFF 303099) (Mesorhizobium loti (strain MAFF 303099)), this protein is Divalent metal cation transporter MntH.